The primary structure comprises 97 residues: Large ribosomal subunit protein bL27 (97 aa).

The propeptide occupies 1 to 12; it reads MLKMNLANLQLF. A disordered region spans residues 14-37; it reads HKKGGGSTSNGRDSQAKRLGAKAA.

The protein belongs to the bacterial ribosomal protein bL27 family. In terms of processing, the N-terminus is cleaved by ribosomal processing cysteine protease Prp.

In Streptococcus agalactiae serotype III (strain NEM316), this protein is Large ribosomal subunit protein bL27.